The primary structure comprises 975 residues: 26S proteasome non-ATPase regulatory subunit 1 (975 aa).

The disordered stretch occupies residues 272 to 303 (EKKSTTTTTTTPASDSMEIDIDSGNEKSGGSS). PC repeat units follow at residues 393–426 (SAIS…NQTP), 431–464 (GSLY…ILHH), 465–499 (GASL…VSGE), 500–534 (AAGL…EKTI), 536–569 (SLSM…LIRY), 570–605 (GGMY…SVRR), 606–638 (AAVT…PHVR), 640–674 (GAAF…YVKQ), 675–715 (AAWI…DSMS), and 718–748 (GAVL…NMNA). 2 disordered regions span residues 832-882 (SSRS…KSNP) and 922-975 (PEQL…EFTE). Composition is skewed to basic and acidic residues over residues 842 to 880 (DVEK…ERKS) and 926 to 935 (VVKEKPETKQ). Residues 944 to 961 (TATATASLPNATTTTSPT) are compositionally biased toward low complexity.

This sequence belongs to the proteasome subunit S1 family.

Functionally, acts as a regulatory subunit of the 26 proteasome which is involved in the ATP-dependent degradation of ubiquitinated proteins. The protein is 26S proteasome non-ATPase regulatory subunit 1 (psmD1) of Dictyostelium discoideum (Social amoeba).